A 260-amino-acid chain; its full sequence is 1-(5-phosphoribosyl)-5-[(5-phosphoribosylamino)methylideneamino] imidazole-4-carboxamide isomerase (260 aa).

Catalysis depends on aspartate 8, which acts as the Proton acceptor. Aspartate 130 functions as the Proton donor in the catalytic mechanism.

Belongs to the HisA/HisF family.

Its subcellular location is the cytoplasm. The catalysed reaction is 1-(5-phospho-beta-D-ribosyl)-5-[(5-phospho-beta-D-ribosylamino)methylideneamino]imidazole-4-carboxamide = 5-[(5-phospho-1-deoxy-D-ribulos-1-ylimino)methylamino]-1-(5-phospho-beta-D-ribosyl)imidazole-4-carboxamide. Its pathway is amino-acid biosynthesis; L-histidine biosynthesis; L-histidine from 5-phospho-alpha-D-ribose 1-diphosphate: step 4/9. This Chlorobium phaeobacteroides (strain BS1) protein is 1-(5-phosphoribosyl)-5-[(5-phosphoribosylamino)methylideneamino] imidazole-4-carboxamide isomerase.